Consider the following 297-residue polypeptide: Pyrroline-5-carboxylate reductase 1 (297 aa).

It belongs to the pyrroline-5-carboxylate reductase family.

The protein localises to the cytoplasm. It carries out the reaction L-proline + NADP(+) = (S)-1-pyrroline-5-carboxylate + NADPH + 2 H(+). The enzyme catalyses L-proline + NAD(+) = (S)-1-pyrroline-5-carboxylate + NADH + 2 H(+). The protein operates within amino-acid biosynthesis; L-proline biosynthesis; L-proline from L-glutamate 5-semialdehyde: step 1/1. Its function is as follows. Catalyzes the reduction of 1-pyrroline-5-carboxylate (PCA) to L-proline. The protein is Pyrroline-5-carboxylate reductase 1 (proH) of Bacillus spizizenii (strain ATCC 23059 / NRRL B-14472 / W23) (Bacillus subtilis subsp. spizizenii).